The following is a 484-amino-acid chain: Glutamate--tRNA ligase (484 aa).

The 'HIGH' region signature appears at 11–21 (PSPTGYLHIGN). Residues 252–256 (KLSKR) carry the 'KMSKS' region motif. K255 is an ATP binding site.

This sequence belongs to the class-I aminoacyl-tRNA synthetase family. Glutamate--tRNA ligase type 1 subfamily. As to quaternary structure, monomer.

The protein localises to the cytoplasm. It carries out the reaction tRNA(Glu) + L-glutamate + ATP = L-glutamyl-tRNA(Glu) + AMP + diphosphate. Its function is as follows. Catalyzes the attachment of glutamate to tRNA(Glu) in a two-step reaction: glutamate is first activated by ATP to form Glu-AMP and then transferred to the acceptor end of tRNA(Glu). The chain is Glutamate--tRNA ligase from Staphylococcus aureus (strain Newman).